The primary structure comprises 293 residues: Histamine N-methyltransferase B (293 aa).

Glu-28 serves as a coordination point for substrate. Gly-60, Glu-89, Gln-94, Ser-120, and Ile-142 together coordinate S-adenosyl-L-methionine. Residue Asn-283 coordinates substrate.

It belongs to the class I-like SAM-binding methyltransferase superfamily. HNMT family. In terms of assembly, monomer.

The protein resides in the cytoplasm. It carries out the reaction histamine + S-adenosyl-L-methionine = N(tau)-methylhistamine + S-adenosyl-L-homocysteine + H(+). In terms of biological role, inactivates histamine by N-methylation. Plays an important role in degrading histamine and in regulating the airway response to histamine. This chain is Histamine N-methyltransferase B (hnmt-b), found in Xenopus laevis (African clawed frog).